Reading from the N-terminus, the 290-residue chain is ATP synthase gamma chain (290 aa).

It belongs to the ATPase gamma chain family. F-type ATPases have 2 components, CF(1) - the catalytic core - and CF(0) - the membrane proton channel. CF(1) has five subunits: alpha(3), beta(3), gamma(1), delta(1), epsilon(1). CF(0) has three main subunits: a, b and c.

Its subcellular location is the cell membrane. Produces ATP from ADP in the presence of a proton gradient across the membrane. The gamma chain is believed to be important in regulating ATPase activity and the flow of protons through the CF(0) complex. The polypeptide is ATP synthase gamma chain (Listeria innocua serovar 6a (strain ATCC BAA-680 / CLIP 11262)).